Consider the following 579-residue polypeptide: Nuclear hormone receptor family member nhr-22 (579 aa).

A DNA-binding region (nuclear receptor) is located at residues 93–173 (SRSCHVCSSP…AGMRRELVQA (81 aa)). 2 consecutive NR C4-type zinc fingers follow at residues 96–117 (CHVC…CKAC) and 133–161 (CIGT…FIKC). Residues 233 to 242 (LSPDPSSSQP) show a composition bias toward low complexity. Positions 233–256 (LSPDPSSSQPLDMTVTPPPLHRST) are disordered. Residues 304 to 577 (EVENKIFELV…SIMYDLLSFR (274 aa)) form the NR LBD domain.

It belongs to the nuclear hormone receptor family.

The protein localises to the nucleus. Orphan nuclear receptor. This Caenorhabditis elegans protein is Nuclear hormone receptor family member nhr-22 (nhr-22).